The primary structure comprises 122 residues: Large ribosomal subunit protein uL14c (122 aa).

The protein belongs to the universal ribosomal protein uL14 family. As to quaternary structure, part of the 50S ribosomal subunit.

It localises to the plastid. The protein resides in the chloroplast. In terms of biological role, binds to 23S rRNA. The sequence is that of Large ribosomal subunit protein uL14c from Zygnema circumcarinatum (Green alga).